The following is a 300-amino-acid chain: tRNA pseudouridine synthase B (300 aa).

Asp47 functions as the Nucleophile in the catalytic mechanism.

Belongs to the pseudouridine synthase TruB family. Type 1 subfamily.

The catalysed reaction is uridine(55) in tRNA = pseudouridine(55) in tRNA. In terms of biological role, responsible for synthesis of pseudouridine from uracil-55 in the psi GC loop of transfer RNAs. This Azoarcus sp. (strain BH72) protein is tRNA pseudouridine synthase B.